A 293-amino-acid chain; its full sequence is Adenylyl-sulfate kinase 2, chloroplastic (293 aa).

Residues 1-59 (MEGLAIRASRPSVFCSIPGLGGDSHRKPPSDGFLKLPASSIPADSRKLVANSTSFHPIS) constitute a chloroplast transit peptide. 122–130 (GLSGSGKST) lines the ATP pocket. Substrate-binding positions include aspartate 152, arginine 155, arginine 169, asparagine 172, 195-196 (IS), and glycine 245. The Phosphoserine intermediate role is filled by serine 196.

The protein belongs to the APS kinase family. Interacts with APK1. In terms of tissue distribution, expressed in root vasculature, root tips, leaf epidermal cells and funiculus of developing seeds.

It localises to the plastid. The protein resides in the chloroplast. The catalysed reaction is adenosine 5'-phosphosulfate + ATP = 3'-phosphoadenylyl sulfate + ADP + H(+). It participates in sulfur metabolism; hydrogen sulfide biosynthesis; sulfite from sulfate: step 2/3. Functionally, catalyzes the synthesis of activated sulfate. Essential for plant reproduction and viability. Required for the production of glucosinolates. This is Adenylyl-sulfate kinase 2, chloroplastic (APK2) from Arabidopsis thaliana (Mouse-ear cress).